The following is a 383-amino-acid chain: Caspase a (383 aa).

A propeptide spanning residues 1 to 142 (MAKSIKDHLQ…ETYEIKDKSV (142 aa)) is cleaved from the precursor. Positions 8–81 (HLQDALSNIG…RGIKCNAVAE (74 aa)) constitute a Pyrin domain. The tract at residues 87–106 (TGQGGVSQPEPPVPEPIPKD) is disordered. Catalysis depends on residues His-220 and Cys-270. A propeptide spanning residues 275–296 (HGRVWASDGEPDEPIEIEDDDF) is cleaved from the precursor.

Belongs to the peptidase C14A family. Heterotetramer that consists of two anti-parallel arranged heterodimers, each one formed by a 20 kDa (p20) and a 10 kDa (p10) subunit. Interacts (via pyrin domain) with pycard (via pyrin domain). Interacts with caspb. Component of NLRP1 inflammasomes. Inflammasomes are supramolecular complexes that assemble in the cytosol in response to pathogens and other damage-associated signals and play critical roles in innate immunity and inflammation. The NLRP1 inflammasome is composed of the signal sensor nlrp1, and the adapter pycard (asc), which recruit effector pro-inflammatory caspases caspa and/or caspb. The interaction between nlrp1 and pycard is required for the sequential recruitment of caspa and then caspb. Caspa is preferentially recruited first and this causes the cleavage of pro-il1b into the midformed il1b. This is followed by the recruitment of caspb, which is activated and cleaves the midformed il1b resulting in il1b maturation. Interacts with caiap. The two subunits are derived from the precursor sequence by an autocatalytic mechanism.

It localises to the inflammasome. The protein resides in the cytoplasm. The enzyme catalyses Strict requirement for an Asp residue at position P1 and has a preferred cleavage sequence of Tyr-Val-Ala-Asp-|-.. Its function is as follows. Thiol protease which cleaves IL-1 beta (il1b), releasing the mature cytokine which is involved in a variety of inflammatory processes, and mediates apoptosis. Component of the NLRP1 inflammasome, which plays a crucial role in innate immunity and inflammation. In response to pathogens and other damage-associated signals, recruited to the NLRP1 inflammasome in its precursor form. Its subsequent activation causes the cleavage of pro-il1b into the midformed il1b, which then evetually leads to il1b maturation and secretion in the extracellular milieu. Required for the development of the cartilaginous pharyngeal skeleton. This is Caspase a from Danio rerio (Zebrafish).